Here is a 703-residue protein sequence, read N- to C-terminus: Lethal(3)malignant brain tumor-like protein 2 (703 aa).

The tract at residues 1 to 70 is disordered; sequence MEKPRGTEET…AGELPTSPLH (70 aa). Ser13 carries the post-translational modification Phosphoserine. The span at 15–25 shows a compositional bias: acidic residues; the sequence is PMEEEEDDDLE. Positions 35 to 49 are enriched in low complexity; that stretch reads SYNSSAGSESSSYLE. The span at 50–60 shows a compositional bias: acidic residues; that stretch reads ESSEAENEDRE. Residue Ser67 is modified to Phosphoserine. The FCS-type zinc-finger motif lies at 81–116; that stretch reads DGSGSEPAVCEMCGIVGTREAFFSKTKRFCSVSCSR. Cys90, Cys93, Cys110, and Cys114 together coordinate Zn(2+). MBT repeat units follow at residues 179-283, 291-391, 397-500, and 508-604; these read FDWG…LVPP, TDWK…IKMS, MSHH…LTPP, and FDWE…LQPP. Ser338 is subject to Phosphoserine. A Glycyl lysine isopeptide (Lys-Gly) (interchain with G-Cter in SUMO2) cross-link involves residue Lys405. Disordered regions lie at residues 604 to 649 and 672 to 703; these read PVSA…KKPL and VKEE…ERDS. The segment covering 619-634 has biased composition (basic residues); the sequence is TKKKKKQFGKKRKRIP. Residues Lys647 and Lys673 each participate in a glycyl lysine isopeptide (Lys-Gly) (interchain with G-Cter in SUMO2) cross-link. A phosphoserine mark is found at Ser681, Ser685, and Ser687. Lys698 is covalently cross-linked (Glycyl lysine isopeptide (Lys-Gly) (interchain with G-Cter in SUMO1); alternate). A Glycyl lysine isopeptide (Lys-Gly) (interchain with G-Cter in SUMO2); alternate cross-link involves residue Lys698.

In terms of assembly, part of the E2F6.com-1 complex in G0 phase composed of E2F6, MGA, MAX, TFDP1, CBX3, BAT8, EUHMTASE1, RING1, RNF2, MBLR, BAT8 and YAF2.

The protein localises to the nucleus. In terms of biological role, putative Polycomb group (PcG) protein. PcG proteins maintain the transcriptionally repressive state of genes, probably via a modification of chromatin, rendering it heritably changed in its expressibility. Its association with a chromatin-remodeling complex suggests that it may contribute to prevent expression of genes that trigger the cell into mitosis. Binds to monomethylated and dimethylated 'Lys-20' on histone H4. Binds histone H3 peptides that are monomethylated or dimethylated on 'Lys-4', 'Lys-9' or 'Lys-27'. This Rattus norvegicus (Rat) protein is Lethal(3)malignant brain tumor-like protein 2 (L3mbtl2).